The sequence spans 480 residues: Ribulose bisphosphate carboxylase large chain (480 aa).

Positions 1-2 (MS) are excised as a propeptide. P3 is modified (N-acetylproline). An N6,N6,N6-trimethyllysine modification is found at K14. Residues N123 and T173 each coordinate substrate. The active-site Proton acceptor is the K175. Substrate is bound at residue K177. Residues K201, D203, and E204 each contribute to the Mg(2+) site. Residue K201 is modified to N6-carboxylysine. H294 functions as the Proton acceptor in the catalytic mechanism. Substrate is bound by residues R295, H327, and S379.

It belongs to the RuBisCO large chain family. Type I subfamily. In terms of assembly, heterohexadecamer of 8 large chains and 8 small chains; disulfide-linked. The disulfide link is formed within the large subunit homodimers. Mg(2+) is required as a cofactor. The disulfide bond which can form in the large chain dimeric partners within the hexadecamer appears to be associated with oxidative stress and protein turnover.

Its subcellular location is the plastid. It is found in the chloroplast. The catalysed reaction is 2 (2R)-3-phosphoglycerate + 2 H(+) = D-ribulose 1,5-bisphosphate + CO2 + H2O. It catalyses the reaction D-ribulose 1,5-bisphosphate + O2 = 2-phosphoglycolate + (2R)-3-phosphoglycerate + 2 H(+). RuBisCO catalyzes two reactions: the carboxylation of D-ribulose 1,5-bisphosphate, the primary event in carbon dioxide fixation, as well as the oxidative fragmentation of the pentose substrate in the photorespiration process. Both reactions occur simultaneously and in competition at the same active site. This Alluaudia procera (Madagascan ocotillo) protein is Ribulose bisphosphate carboxylase large chain.